We begin with the raw amino-acid sequence, 141 residues long: Large ribosomal subunit protein uL11 (141 aa).

It belongs to the universal ribosomal protein uL11 family. As to quaternary structure, part of the ribosomal stalk of the 50S ribosomal subunit. Interacts with L10 and the large rRNA to form the base of the stalk. L10 forms an elongated spine to which L12 dimers bind in a sequential fashion forming a multimeric L10(L12)X complex. One or more lysine residues are methylated.

Functionally, forms part of the ribosomal stalk which helps the ribosome interact with GTP-bound translation factors. This is Large ribosomal subunit protein uL11 from Acetivibrio thermocellus (strain ATCC 27405 / DSM 1237 / JCM 9322 / NBRC 103400 / NCIMB 10682 / NRRL B-4536 / VPI 7372) (Clostridium thermocellum).